The primary structure comprises 646 residues: MVMYARKQQRLSDGCHDRRGDSQPFQALKYSSKSHPSSGDHRHEKMRDAADPSPPNKMLRRSNSPENKYSDSTGHNKAKNVHTQRVRERDGGTSYSPQENSHNHSALHSSNSHSSNPSNNPSKTSDAPYDSADDWSEHISSSGKKYYYNCRTEVSQWEKPKEWLEREQRQKEANKLAVNSFPKDRDYRREVMQATATSGFTSGMEDKHSSDASSLLPQNILSQTSRHNDKDYRLPRAETHSSSTPVQHPIKPVVHPTATPSTVPSSPFTLQSDHQPKKSFDANGASTLSKLPTPTASLPAQKTERKESAPGDKSISHSCTTPSTSSASGLNPTSAPPTSASAVPVSPVPQSTIPPLLQDPNLFRQLLPALQATLQLNNSNVDISKINEVLTAAVTQASLQSIIHKFLTAGPSAFNITSLISQAAQLSTQAQPSNQSPMSLTSDASSPRSYVSPRISTPQTNTVPMKPLISTPPVSSQPKVSTPVVKQGPVSHSATQQPVTADKQQSHDPVSPRSLQRLSSQRSPSPGPNHTCSSNASTATVVPQNASARPACSLTPTLAAHFNDNLIKHVQGWPADHAEKQASRLREEAHNMGSVHMSEICTELKNLRSLVRVCEIQATLREQRILFLRQQIKELEKLKNQNSFMV.

The interval 1-138 is disordered; it reads MVMYARKQQR…YDSADDWSEH (138 aa). Polar residues predominate over residues 23 to 37; that stretch reads QPFQALKYSSKSHPS. The span at 38-50 shows a compositional bias: basic and acidic residues; that stretch reads SGDHRHEKMRDAA. Ser-53 is subject to Phosphoserine. Residues 61 to 75 show a composition bias toward polar residues; sequence RSNSPENKYSDSTGH. The span at 103–122 shows a compositional bias: low complexity; sequence NHSALHSSNSHSSNPSNNPS. The region spanning 129–162 is the WW domain; it reads YDSADDWSEHISSSGKKYYYNCRTEVSQWEKPKE. Phosphoserine occurs at positions 131 and 142. 2 stretches are compositionally biased toward basic and acidic residues: residues 158–174 and 182–191; these read EKPK…KEAN and PKDRDYRREV. Disordered stretches follow at residues 158–352 and 428–541; these read EKPK…PQST and TQAQ…TATV. Polar residues predominate over residues 211–225; that stretch reads DASSLLPQNILSQTS. Phosphoserine is present on Ser-225. Basic and acidic residues predominate over residues 226 to 239; sequence RHNDKDYRLPRAET. Residues 252-267 show a composition bias toward low complexity; that stretch reads PVVHPTATPSTVPSSP. Over residues 284–300 the composition is skewed to polar residues; sequence GASTLSKLPTPTASLPA. At Thr-293 the chain carries Phosphothreonine. Lys-302 bears the N6-acetyllysine mark. Positions 316 to 331 are enriched in polar residues; it reads SHSCTTPSTSSASGLN. Residues 332-351 show a composition bias toward low complexity; it reads PTSAPPTSASAVPVSPVPQS. Over residues 428–463 the composition is skewed to polar residues; sequence TQAQPSNQSPMSLTSDASSPRSYVSPRISTPQTNTV. At Ser-446 the chain carries Phosphoserine. At Thr-471 the chain carries Phosphothreonine. The segment covering 490–503 has biased composition (polar residues); it reads VSHSATQQPVTADK. Phosphoserine is present on residues Ser-511, Ser-523, and Ser-525. Over residues 511–524 the composition is skewed to low complexity; the sequence is SPRSLQRLSSQRSP. Polar residues predominate over residues 528–541; it reads PNHTCSSNASTATV. Residues 617–643 adopt a coiled-coil conformation; it reads QATLREQRILFLRQQIKELEKLKNQNS.

As to quaternary structure, interacts (via coiled coil domain) with RNF20, RNF40 and UBE2A. Interacts (via WW domain) with RNA polymerase II. Interacts with MTOR and other components of the MTOR pathway including RPTOR, RUVBL1, RUVBL2, TTI1 and TTI2. Phosphorylated on tyrosine residues.

It is found in the nucleus speckle. The protein localises to the nucleus. Its function is as follows. Acts as a linker between gene transcription and histone H2B monoubiquitination at 'Lys-120' (H2BK120ub1). Interacts with the RNA polymerase II transcriptional machinery via its WW domain and with RNF20-RNF40 via its coiled coil region, thereby linking and regulating H2BK120ub1 and gene transcription. Regulates the cell-cycle checkpoint activation in response to DNA damage. Positive regulator of amino acid starvation-induced autophagy. Also acts as a negative regulator of basal autophagy. Positively regulates MTOR activity by promoting, in an energy-dependent manner, the assembly of the TTT complex composed of TELO2, TTI1 and TTI2 and the RUVBL complex composed of RUVBL1 and RUVBL2 into the TTT-RUVBL complex. This leads to the dimerization of the mTORC1 complex and its subsequent activation. May negatively regulate the ubiquitin proteasome pathway. In Mus musculus (Mouse), this protein is WW domain-containing adapter protein with coiled-coil (Wac).